We begin with the raw amino-acid sequence, 1403 residues long: DNA-directed RNA polymerase subunit beta' (1403 aa).

Residues C69, C71, C84, and C87 each coordinate Zn(2+). Residues D461, D463, and D465 each coordinate Mg(2+). Positions 818, 891, 898, and 901 each coordinate Zn(2+). Positions 1384-1403 (LELLRNEGEDETGNEELVAE) are disordered. Acidic residues predominate over residues 1391–1403 (GEDETGNEELVAE).

This sequence belongs to the RNA polymerase beta' chain family. As to quaternary structure, the RNAP catalytic core consists of 2 alpha, 1 beta, 1 beta' and 1 omega subunit. When a sigma factor is associated with the core the holoenzyme is formed, which can initiate transcription. Mg(2+) is required as a cofactor. It depends on Zn(2+) as a cofactor.

It catalyses the reaction RNA(n) + a ribonucleoside 5'-triphosphate = RNA(n+1) + diphosphate. DNA-dependent RNA polymerase catalyzes the transcription of DNA into RNA using the four ribonucleoside triphosphates as substrates. This is DNA-directed RNA polymerase subunit beta' from Koribacter versatilis (strain Ellin345).